A 437-amino-acid polypeptide reads, in one-letter code: Dihydrofolate synthase/folylpolyglutamate synthase (437 aa).

Residue 28 to 30 participates in 7,8-dihydropteroate binding; the sequence is DLG. Position 58-61 (58-61) interacts with ATP; that stretch reads GKGT. Ser82 serves as a coordination point for Mg(2+). 120 to 123 provides a ligand contact to 7,8-dihydropteroate; the sequence is TYFE. Glu144 provides a ligand contact to Mg(2+). 151–153 contacts 7,8-dihydropteroate; the sequence is LDA. His171 provides a ligand contact to Mg(2+). ATP is bound by residues Asn255, Arg287, and Asp316.

It belongs to the folylpolyglutamate synthase family. Monomer. It depends on Mg(2+) as a cofactor.

The enzyme catalyses 7,8-dihydropteroate + L-glutamate + ATP = 7,8-dihydrofolate + ADP + phosphate + H(+). It catalyses the reaction (6S)-5,6,7,8-tetrahydrofolyl-(gamma-L-Glu)(n) + L-glutamate + ATP = (6S)-5,6,7,8-tetrahydrofolyl-(gamma-L-Glu)(n+1) + ADP + phosphate + H(+). The catalysed reaction is 10-formyltetrahydrofolyl-(gamma-L-Glu)(n) + L-glutamate + ATP = 10-formyltetrahydrofolyl-(gamma-L-Glu)(n+1) + ADP + phosphate + H(+). It carries out the reaction (6R)-5,10-methylenetetrahydrofolyl-(gamma-L-Glu)(n) + L-glutamate + ATP = (6R)-5,10-methylenetetrahydrofolyl-(gamma-L-Glu)(n+1) + ADP + phosphate + H(+). The protein operates within cofactor biosynthesis; tetrahydrofolate biosynthesis; 7,8-dihydrofolate from 2-amino-4-hydroxy-6-hydroxymethyl-7,8-dihydropteridine diphosphate and 4-aminobenzoate: step 2/2. It functions in the pathway cofactor biosynthesis; tetrahydrofolylpolyglutamate biosynthesis. Functionally, functions in two distinct reactions of the de novo folate biosynthetic pathway. Catalyzes the addition of a glutamate residue to dihydropteroate (7,8-dihydropteroate or H2Pte) to form dihydrofolate (7,8-dihydrofolate monoglutamate or H2Pte-Glu). Also catalyzes successive additions of L-glutamate to tetrahydrofolate or 10-formyltetrahydrofolate or 5,10-methylenetetrahydrofolate, leading to folylpolyglutamate derivatives. The protein is Dihydrofolate synthase/folylpolyglutamate synthase (folC) of Haemophilus influenzae (strain ATCC 51907 / DSM 11121 / KW20 / Rd).